The primary structure comprises 157 residues: Methylglyoxal synthase (157 aa).

Residues 1–157 form the MGS-like domain; sequence MSKVKNIAVV…DFSSYTQRKL (157 aa). Substrate-binding positions include H12, K16, 38 to 41, and 71 to 72; these read TGTT and SG. D77 functions as the Proton donor/acceptor in the catalytic mechanism. H104 is a binding site for substrate.

Belongs to the methylglyoxal synthase family.

It carries out the reaction dihydroxyacetone phosphate = methylglyoxal + phosphate. Functionally, catalyzes the formation of methylglyoxal from dihydroxyacetone phosphate. This is Methylglyoxal synthase from Maridesulfovibrio salexigens (strain ATCC 14822 / DSM 2638 / NCIMB 8403 / VKM B-1763) (Desulfovibrio salexigens).